Here is a 349-residue protein sequence, read N- to C-terminus: N-acetyl-gamma-glutamyl-phosphate reductase (349 aa).

Residue Cys-149 is part of the active site.

Belongs to the NAGSA dehydrogenase family. Type 1 subfamily.

It is found in the cytoplasm. It catalyses the reaction N-acetyl-L-glutamate 5-semialdehyde + phosphate + NADP(+) = N-acetyl-L-glutamyl 5-phosphate + NADPH + H(+). Its pathway is amino-acid biosynthesis; L-arginine biosynthesis; N(2)-acetyl-L-ornithine from L-glutamate: step 3/4. Catalyzes the NADPH-dependent reduction of N-acetyl-5-glutamyl phosphate to yield N-acetyl-L-glutamate 5-semialdehyde. The protein is N-acetyl-gamma-glutamyl-phosphate reductase of Acinetobacter baumannii (strain SDF).